Consider the following 385-residue polypeptide: Putative transport protein BpOF4_00890 (385 aa).

8 helical membrane passes run 42–62 (TIWIIISILLFLVAAYFILPV), 63–83 (SLPLVAALLTALILTPAVNAL), 93–113 (VAVMLVFTVFVVFIGLSGYYI), 191–211 (SIPGYLVTFLVYLIALFLFML), 255–275 (IIIFIVTLIGLLFIAPEVALL), 276–296 (MAFIIWLIDFVPIIGSIVILA), 304–324 (IVGDVSTGSKLLILAAVLLII), and 350–370 (LGLMLFGVIGFIIGPLLVIAF).

This sequence belongs to the autoinducer-2 exporter (AI-2E) (TC 2.A.86) family.

Its subcellular location is the cell membrane. This Alkalihalophilus pseudofirmus (strain ATCC BAA-2126 / JCM 17055 / OF4) (Bacillus pseudofirmus) protein is Putative transport protein BpOF4_00890.